The chain runs to 173 residues: Co-chaperone protein HscB (173 aa).

Residues 2 to 74 (DYFTLLGMPN…LSRAEYMLSL (73 aa)) form the J domain.

Belongs to the HscB family. As to quaternary structure, interacts with HscA and stimulates its ATPase activity. Interacts with IscU.

In terms of biological role, co-chaperone involved in the maturation of iron-sulfur cluster-containing proteins. Seems to help targeting proteins to be folded toward HscA. The polypeptide is Co-chaperone protein HscB (Proteus mirabilis (strain HI4320)).